Reading from the N-terminus, the 407-residue chain is Protein RecA (407 aa).

An ATP-binding site is contributed by 79 to 86 (GPESSGKT). The interval 358–407 (LSLEASPEESDAKTLRRXASRGAGASSSRVQEGSAANDHFQDESTTAKLL) is disordered. A compositionally biased stretch (low complexity) spans 377–386 (SRGAGASSSR).

It belongs to the RecA family.

It localises to the cytoplasm. Can catalyze the hydrolysis of ATP in the presence of single-stranded DNA, the ATP-dependent uptake of single-stranded DNA by duplex DNA, and the ATP-dependent hybridization of homologous single-stranded DNAs. It interacts with LexA causing its activation and leading to its autocatalytic cleavage. This Treponema pallidum (strain Nichols) protein is Protein RecA.